The sequence spans 475 residues: Ribulose bisphosphate carboxylase large chain (475 aa).

A propeptide spanning residues 1–2 (MS) is cleaved from the precursor. Proline 3 bears the N-acetylproline mark. Asparagine 123 and threonine 173 together coordinate substrate. Lysine 175 functions as the Proton acceptor in the catalytic mechanism. Residue lysine 177 participates in substrate binding. Mg(2+) contacts are provided by lysine 201, aspartate 203, and glutamate 204. Position 201 is an N6-carboxylysine (lysine 201). The active-site Proton acceptor is histidine 294. Substrate-binding residues include arginine 295, histidine 327, and serine 379.

It belongs to the RuBisCO large chain family. Type I subfamily. As to quaternary structure, heterohexadecamer of 8 large chains and 8 small chains; disulfide-linked. The disulfide link is formed within the large subunit homodimers. Mg(2+) is required as a cofactor. The disulfide bond which can form in the large chain dimeric partners within the hexadecamer appears to be associated with oxidative stress and protein turnover.

The protein resides in the plastid. It is found in the chloroplast. It carries out the reaction 2 (2R)-3-phosphoglycerate + 2 H(+) = D-ribulose 1,5-bisphosphate + CO2 + H2O. The enzyme catalyses D-ribulose 1,5-bisphosphate + O2 = 2-phosphoglycolate + (2R)-3-phosphoglycerate + 2 H(+). Functionally, ruBisCO catalyzes two reactions: the carboxylation of D-ribulose 1,5-bisphosphate, the primary event in carbon dioxide fixation, as well as the oxidative fragmentation of the pentose substrate in the photorespiration process. Both reactions occur simultaneously and in competition at the same active site. This chain is Ribulose bisphosphate carboxylase large chain, found in Welwitschia mirabilis (Tree tumbo).